We begin with the raw amino-acid sequence, 393 residues long: Formate-dependent phosphoribosylglycinamide formyltransferase (393 aa).

N(1)-(5-phospho-beta-D-ribosyl)glycinamide-binding positions include 22–23 (EL) and Glu82. ATP contacts are provided by residues Arg114, Lys155, 160 to 165 (SSGKGQ), 195 to 198 (EGFI), and Glu203. The ATP-grasp domain occupies 119–308 (RLAAEELKLP…QFALHARAIL (190 aa)). Mg(2+)-binding residues include Glu267 and Glu279. Residues Asp286, Lys356, and 363–364 (RR) each bind N(1)-(5-phospho-beta-D-ribosyl)glycinamide.

This sequence belongs to the PurK/PurT family. Homodimer.

The catalysed reaction is N(1)-(5-phospho-beta-D-ribosyl)glycinamide + formate + ATP = N(2)-formyl-N(1)-(5-phospho-beta-D-ribosyl)glycinamide + ADP + phosphate + H(+). The protein operates within purine metabolism; IMP biosynthesis via de novo pathway; N(2)-formyl-N(1)-(5-phospho-D-ribosyl)glycinamide from N(1)-(5-phospho-D-ribosyl)glycinamide (formate route): step 1/1. Its function is as follows. Involved in the de novo purine biosynthesis. Catalyzes the transfer of formate to 5-phospho-ribosyl-glycinamide (GAR), producing 5-phospho-ribosyl-N-formylglycinamide (FGAR). Formate is provided by PurU via hydrolysis of 10-formyl-tetrahydrofolate. The sequence is that of Formate-dependent phosphoribosylglycinamide formyltransferase from Pseudomonas savastanoi pv. phaseolicola (strain 1448A / Race 6) (Pseudomonas syringae pv. phaseolicola (strain 1448A / Race 6)).